Consider the following 214-residue polypeptide: ATP-dependent Clp protease proteolytic subunit 2 (214 aa).

The active-site Nucleophile is serine 110. Histidine 135 is a catalytic residue.

This sequence belongs to the peptidase S14 family. Fourteen ClpP subunits assemble into 2 heptameric rings which stack back to back to give a disk-like structure with a central cavity, resembling the structure of eukaryotic proteasomes.

It localises to the cytoplasm. It carries out the reaction Hydrolysis of proteins to small peptides in the presence of ATP and magnesium. alpha-casein is the usual test substrate. In the absence of ATP, only oligopeptides shorter than five residues are hydrolyzed (such as succinyl-Leu-Tyr-|-NHMec, and Leu-Tyr-Leu-|-Tyr-Trp, in which cleavage of the -Tyr-|-Leu- and -Tyr-|-Trp bonds also occurs).. In terms of biological role, cleaves peptides in various proteins in a process that requires ATP hydrolysis. Has a chymotrypsin-like activity. Plays a major role in the degradation of misfolded proteins. This Mycobacterium leprae (strain TN) protein is ATP-dependent Clp protease proteolytic subunit 2.